A 131-amino-acid polypeptide reads, in one-letter code: Profilin-2 (131 aa).

This sequence belongs to the profilin family. Occurs in many kinds of cells as a complex with monomeric actin in a 1:1 ratio.

The protein localises to the cytoplasm. It localises to the cytoskeleton. Binds to actin and affects the structure of the cytoskeleton. At high concentrations, profilin prevents the polymerization of actin, whereas it enhances it at low concentrations. By binding to PIP2, it inhibits the formation of IP3 and DG. The polypeptide is Profilin-2 (Lilium longiflorum (Trumpet lily)).